Reading from the N-terminus, the 119-residue chain is Divalent-cation tolerance protein CutA (119 aa).

Residues Cys23, His90, and His91 each contribute to the Cu cation site.

This sequence belongs to the CutA family. In terms of assembly, homotrimer. Requires Cu cation as cofactor.

The protein resides in the cytoplasm. In terms of biological role, involved in resistance toward heavy metals. The sequence is that of Divalent-cation tolerance protein CutA from Yersinia pseudotuberculosis serotype O:1b (strain IP 31758).